A 427-amino-acid chain; its full sequence is rRNA-processing protein EBP2 (427 aa).

Basic and acidic residues-rich tracts occupy residues 29 to 40 and 49 to 65; these read KKKSQELKKEEP and KKLEKKEKKADVKKEVA. The segment at 29-190 is disordered; that stretch reads KKKSQELKKE…FDSDADVVPH (162 aa). The stretch at 45 to 174 forms a coiled coil; sequence ASNLKKLEKK…KEEQEEEQDV (130 aa). The segment covering 79 to 88 has biased composition (basic residues); that stretch reads KEKRKLKKEL. Residues 89-105 are compositionally biased toward basic and acidic residues; it reads KKMQEQDATEAQKHMSG. Residue Ser-104 is modified to Phosphoserine. Residues 106 to 126 show a composition bias toward acidic residues; it reads DEDESGDDREEEEEEEEEEEG. Positions 127 to 138 are enriched in basic and acidic residues; the sequence is RLDLEKLAKSDS. Composition is skewed to acidic residues over residues 139 to 155 and 163 to 185; these read ESEDDSESENDSEEDED and EEKEEQEEEQDVPLSDVEFDSDA. 2 positions are modified to phosphoserine: Ser-177 and Ser-183. Coiled-coil stretches lie at residues 234-265 and 291-348; these read KDIYDDTERELAFYKQSLDAVLVARDELKRLK and KLIE…KHNE. The tract at residues 361 to 427 is disordered; it reads EVEGKRFDRG…PGKSRRARRF (67 aa). The segment covering 397 to 407 has biased composition (polar residues); the sequence is ATSSADVSGFS. Positions 409 to 427 are enriched in basic residues; it reads RKMKGKTNRPGKSRRARRF.

This sequence belongs to the EBP2 family. Interacts with LOC1, NOP12, SIZ2, ULS1 and WSS1. Post-translationally, sumoylated.

It localises to the nucleus. The protein localises to the nucleolus. Its function is as follows. Required for the processing of the 27S pre-rRNA. Probably involved in the step of the processing of the 27 SA precursor into the 27 SB intermediate. In Saccharomyces cerevisiae (strain ATCC 204508 / S288c) (Baker's yeast), this protein is rRNA-processing protein EBP2 (EBP2).